Here is a 128-residue protein sequence, read N- to C-terminus: Large ribosomal subunit protein uL22 (128 aa).

Belongs to the universal ribosomal protein uL22 family. As to quaternary structure, part of the 50S ribosomal subunit.

Its function is as follows. This protein binds specifically to 23S rRNA; its binding is stimulated by other ribosomal proteins, e.g. L4, L17, and L20. It is important during the early stages of 50S assembly. It makes multiple contacts with different domains of the 23S rRNA in the assembled 50S subunit and ribosome. The globular domain of the protein is located near the polypeptide exit tunnel on the outside of the subunit, while an extended beta-hairpin is found that lines the wall of the exit tunnel in the center of the 70S ribosome. In Prochlorococcus marinus subsp. pastoris (strain CCMP1986 / NIES-2087 / MED4), this protein is Large ribosomal subunit protein uL22.